The chain runs to 397 residues: Arginine biosynthesis bifunctional protein ArgJ (397 aa).

Residues threonine 147, lysine 173, threonine 184, glutamate 270, asparagine 392, and threonine 397 each coordinate substrate. Threonine 184 acts as the Nucleophile in catalysis.

Belongs to the ArgJ family. In terms of assembly, heterotetramer of two alpha and two beta chains.

The protein resides in the cytoplasm. The enzyme catalyses N(2)-acetyl-L-ornithine + L-glutamate = N-acetyl-L-glutamate + L-ornithine. The catalysed reaction is L-glutamate + acetyl-CoA = N-acetyl-L-glutamate + CoA + H(+). Its pathway is amino-acid biosynthesis; L-arginine biosynthesis; L-ornithine and N-acetyl-L-glutamate from L-glutamate and N(2)-acetyl-L-ornithine (cyclic): step 1/1. It functions in the pathway amino-acid biosynthesis; L-arginine biosynthesis; N(2)-acetyl-L-ornithine from L-glutamate: step 1/4. Functionally, catalyzes two activities which are involved in the cyclic version of arginine biosynthesis: the synthesis of N-acetylglutamate from glutamate and acetyl-CoA as the acetyl donor, and of ornithine by transacetylation between N(2)-acetylornithine and glutamate. The protein is Arginine biosynthesis bifunctional protein ArgJ of Streptococcus thermophilus (strain CNRZ 1066).